The sequence spans 192 residues: Cytidylate kinase (192 aa).

7–15 (GPAGSGKST) contacts ATP.

This sequence belongs to the cytidylate kinase family. Type 2 subfamily.

The protein localises to the cytoplasm. The catalysed reaction is CMP + ATP = CDP + ADP. The enzyme catalyses dCMP + ATP = dCDP + ADP. This is Cytidylate kinase from Haloarcula marismortui (strain ATCC 43049 / DSM 3752 / JCM 8966 / VKM B-1809) (Halobacterium marismortui).